A 97-amino-acid chain; its full sequence is Large ribosomal subunit protein uL23 (97 aa).

Belongs to the universal ribosomal protein uL23 family. In terms of assembly, part of the 50S ribosomal subunit. Contacts protein L29, and trigger factor when it is bound to the ribosome.

Its function is as follows. One of the early assembly proteins it binds 23S rRNA. One of the proteins that surrounds the polypeptide exit tunnel on the outside of the ribosome. Forms the main docking site for trigger factor binding to the ribosome. The chain is Large ribosomal subunit protein uL23 from Brucella suis (strain ATCC 23445 / NCTC 10510).